The sequence spans 186 residues: ADP-ribosylation factor-like protein 8B (186 aa).

Residues 1–19 (MLALISRLLDWFRSLFWKE) constitute an intramembrane region (note=Mediates targeting to membranes). GTP contacts are provided by residues 29–35 (QYSGKTT), 71–75 (DIGGQ), and 130–133 (NKRD). K141 is covalently cross-linked (Glycyl lysine isopeptide (Lys-Gly) (interchain with G-Cter in ubiquitin)).

This sequence belongs to the small GTPase superfamily. Arf family. As to quaternary structure, interacts with tubulin. Interacts with BORCS5; recruits ARL8B to lysosomes. Interacts with VPS41; the interaction mediates the recruitment of the HOPS complex to lysosomes. Interacts (GTP-bound form) with PLEKHM2 (via RUN domain); the interaction is required to recruit the motor protein kinesin-1 on lysosomes. Interacts (GTP-bound form) with PLEKHM1 (via RUN domain); the interaction is required for PLEKHM1 localization to lysosomes and for ARL8B function in delivery and degradation of endocytic and autophagic cargo in lysosomes. PLEKHM1 and PLEKHM2 compete for interaction with ARL8B. Interacts (GTP-bound form) with RUFY1; the interaction is required for RUFY1 endosomal location. When GTP-bound, interacts with RUFY3 and RUFY4, but not with RUFY1, nor RUFY2. Post-translationally, ubiquitinated at Lys-141 by RNF167, leading to its degradation.

It localises to the late endosome membrane. The protein resides in the lysosome membrane. It is found in the cytoplasm. The protein localises to the cytoskeleton. Its subcellular location is the spindle. It localises to the cell projection. The protein resides in the axon. It is found in the synapse. The protein localises to the cytolytic granule membrane. Its subcellular location is the early endosome membrane. It catalyses the reaction GTP + H2O = GDP + phosphate + H(+). In terms of biological role, small GTPase which cycles between active GTP-bound and inactive GDP-bound states. In its active state, binds to a variety of effector proteins playing a key role in the regulation of lysosomal positioning which is important for nutrient sensing, natural killer cell-mediated cytotoxicity and antigen presentation. Along with its effectors, orchestrates lysosomal transport and fusion. Localizes specifically to lysosomal membranes and mediates anterograde lysosomal motility by recruiting PLEKHM2, which in turn recruits the motor protein kinesin-1 on lysosomes. Required for lysosomal and cytolytic granule exocytosis. Critical factor involved in NK cell-mediated cytotoxicity. Drives the polarization of cytolytic granules and microtubule-organizing centers (MTOCs) toward the immune synapse between effector NK lymphocytes and target cells. In neurons, mediates the anterograde axonal long-range transport of presynaptic lysosome-related vesicles required for presynaptic biogenesis and synaptic function. Also acts as a regulator of endosome to lysosome trafficking pathways of special significance for host defense. Recruits RUFY1 onto early endosomes regulating endosomes to trans-Golgi network proteins retrieval. Regulates cargo trafficking to lysosomes by binding to PLEKHM1 and recruiting the HOPS subunit VPS41, resulting in functional assembly of the HOPS complex on lysosomal membranes. Plays an important role in cargo delivery to lysosomes for antigen presentation and microbial killing. Directs the intersection of CD1d with lipid antigens in lysosomes, and plays a role in intersecting phagosomes with lysosomes to generate phagolysosomes that kill microbes. Involved in the process of MHC II presentation. Regulates the delivery of antigens to lysosomes and the formation of MHC II-peptide complexes through the recruitment of the HOPS complex to lysosomes allowing the fusion of late endosomes to lysosomes. May play a role in chromosome segregation. The sequence is that of ADP-ribosylation factor-like protein 8B (ARL8B) from Bos taurus (Bovine).